Consider the following 559-residue polypeptide: MAAQGFLLTASFLLILFVLARPLGVGLARLINDIPLPGTASVERLLWRGLGISTQEMDWKQYLLAILTLNLLGLTVLFLMLLGQNLLPLNPQQLPGLSWHLALNTAISFVTNTNWQSYGGETTLSYFSQMAGLTVQNFLSAATGIAVIFALIRAFTRQNIDTLGNAWMDLVRITLWILLPLALLIALLFIQQGALQNLLPYQSFTSVEGVKQLLPMGPVASQEAIKMLGTNGGGFFNANSSHPFENPSALTNMVQMLAIFLIPAALCFAFGDASGDRRQGQMLLWAMSIIFVVCVAVVMSAEVQGNPHLLKFGTDSSLNMEGKESRFGVLVSSLFAVVTTAASCGAVIAMHDSFTALGGMVPMWLMQIGEVVFGGVGSGLYGMLLFVLLAVFIAGLMIGRTPEYLGKKIDVREMKMTALAILITPTLVLLGTALAMMTETGRSGMLNPGPHGFSEVLYAVSSAANNNGSAFAGLNANTPFWNCLLAFCMFVGRFGVIIPVMAIAGSLVGKKRQPASPGTLPTHGALFVGLLIGTVLLVGALTFIPALALGPVAEHLSLY.

Transmembrane regions (helical) follow at residues 5 to 25 (GFLL…PLGV), 63 to 83 (LLAI…MLLG), 132 to 152 (GLTV…FALI), 170 to 190 (LVRI…LLFI), 250 to 270 (LTNM…CFAF), 283 to 303 (LLWA…SAEV), 329 to 349 (VLVS…AVIA), 356 to 376 (ALGG…FGGV), 379 to 399 (GLYG…LMIG), 416 to 436 (MTAL…ALAM), 484 to 504 (LLAF…MAIA), and 524 to 544 (GALF…LTFI).

This sequence belongs to the KdpA family. In terms of assembly, the system is composed of three essential subunits: KdpA, KdpB and KdpC.

Its subcellular location is the cell inner membrane. Part of the high-affinity ATP-driven potassium transport (or Kdp) system, which catalyzes the hydrolysis of ATP coupled with the electrogenic transport of potassium into the cytoplasm. This subunit binds the periplasmic potassium ions and delivers the ions to the membrane domain of KdpB through an intramembrane tunnel. The protein is Potassium-transporting ATPase potassium-binding subunit of Citrobacter koseri (strain ATCC BAA-895 / CDC 4225-83 / SGSC4696).